A 195-amino-acid chain; its full sequence is MNIPNLITVLRVLLIPIFILLFYLPYNWSYMAASSVFAFAAATDWLDGYLARRLEQSTPFGAFLDPVADKLMVAVALVLLVQEHGNLWLTLPAAVIIGREIVVSALREWMAELGRTRPGGRCPTWANRKTAAQMLALVILLANPPAFTFWVLLGYAFLLIAGGLTLWSMLQYLRAAWPHLKTDGRKEIKLFESRG.

The next 4 helical transmembrane spans lie at 7 to 24 (ITVLRVLLIPIFILLFYL), 60 to 81 (FGAFLDPVADKLMVAVALVLLV), 134 to 150 (MLALVILLANPPAFTFW), and 157 to 173 (FLLIAGGLTLWSMLQYL).

The protein belongs to the CDP-alcohol phosphatidyltransferase class-I family.

Its subcellular location is the cell membrane. The enzyme catalyses a CDP-1,2-diacyl-sn-glycerol + sn-glycerol 3-phosphate = a 1,2-diacyl-sn-glycero-3-phospho-(1'-sn-glycero-3'-phosphate) + CMP + H(+). It functions in the pathway phospholipid metabolism; phosphatidylglycerol biosynthesis; phosphatidylglycerol from CDP-diacylglycerol: step 1/2. This protein catalyzes the committed step to the synthesis of the acidic phospholipids. The chain is CDP-diacylglycerol--glycerol-3-phosphate 3-phosphatidyltransferase (pgsA) from Pseudomonas fluorescens.